The primary structure comprises 975 residues: Macrophage colony-stimulating factor 1 receptor 1 (975 aa).

Residues 1 to 17 (MQSFLPLLMGIMASASS) form the signal peptide. At 18 to 519 (VEWRHPVIWF…VEVSDKLFTS (502 aa)) the chain is on the extracellular side. 5 Ig-like C2-type domains span residues 34 to 113 (SSEV…VYVK), 125 to 208 (SLRV…INVI), 221 to 310 (MDEY…LLVV), 329 to 407 (GLSV…FHVK), and 404 to 513 (FHVK…VEVS). Disulfide bonds link C49–C93, C140–C189, and C236–C292. N-linked (GlcNAc...) asparagine glycans are attached at residues N156, N165, N246, N250, N289, N301, N399, N420, and N451. Residues C426 and C495 are joined by a disulfide bond. A helical membrane pass occupies residues 520–540 (TLIGAAGVLAIFLLLLVFLLY). The Cytoplasmic portion of the chain corresponds to 541-975 (KYKQKPRFEI…LMKTNNYQFC (435 aa)). The interval 544 to 576 (QKPRFEIRWKIIEAREGNNYTFIDPTQLPYNEK) is regulatory juxtamembrane domain. Y563 is modified (phosphotyrosine; by autocatalysis). A Protein kinase domain is found at 584-918 (LKLGKVLGAG…MISQMINRLL (335 aa)). ATP-binding positions include 590 to 598 (LGAGAFGKV) and K619. 2 positions are modified to phosphotyrosine; by autocatalysis: Y702 and Y726. The active-site Proton acceptor is the D782. The interval 800–822 (DFGLARDIMNDSNYVVKGNARLP) is activation loop. 2 positions are modified to phosphotyrosine; by autocatalysis: Y813 and Y929. Residues 939-963 (EGEACDEPKRYDPPCERSCDHEEEE) form a disordered region. Residues 944-958 (DEPKRYDPPCERSCD) show a composition bias toward basic and acidic residues. A Phosphotyrosine; by autocatalysis modification is found at Y972.

It belongs to the protein kinase superfamily. Tyr protein kinase family. CSF-1/PDGF receptor subfamily. As to quaternary structure, monomer. Homodimer. Interacts with CSF1. In terms of processing, autophosphorylated in response to CSF1 binding. autophosphorylation, leading to its degradation. Post-translationally, ubiquitinated. Becomes rapidly polyubiquitinated after autophosphorylation, leading to its degradation.

Its subcellular location is the cell membrane. The catalysed reaction is L-tyrosyl-[protein] + ATP = O-phospho-L-tyrosyl-[protein] + ADP + H(+). Present in an inactive conformation in the absence of bound ligand. CSF1 binding leads to dimerization and activation by autophosphorylation on tyrosine residues. In terms of biological role, tyrosine-protein kinase that acts as a cell-surface receptor for CSF1 and plays an essential role in the regulation of survival, proliferation and differentiation of hematopoietic precursor cells, especially mononuclear phagocytes, such as macrophages and monocytes. Plays an important role in innate immunity and in inflammatory processes. Plays an important role in the regulation of osteoclast proliferation and differentiation, the regulation of bone resorption, and is required for normal bone development. Promotes reorganization of the actin cytoskeleton, regulates formation of membrane ruffles, cell adhesion and cell migration. Activates several signaling pathways in response to ligand binding. This chain is Macrophage colony-stimulating factor 1 receptor 1 (csf1r1), found in Takifugu rubripes (Japanese pufferfish).